Reading from the N-terminus, the 823-residue chain is Probable inorganic carbon transporter subunit DabA (823 aa).

Zn(2+)-binding residues include Cys361, Asp363, His527, and Cys542.

Belongs to the inorganic carbon transporter (TC 9.A.2) DabA family. Forms a complex with DabB. The cofactor is Zn(2+).

It localises to the cell inner membrane. Its activity is regulated as follows. Intracellular DIC accumulation is sensitive to CCCP (carbonyl cyanide-m-chlorophenylhydrazone) and DCCD (N,N-dicyclohexylcarbodiimide) and therefore likely driven by either proton potential, ATP, or both. Functionally, part of an energy-coupled inorganic carbon pump. Probably involved in transport of dissolved inorganic carbon (DIC) with upstream gene dabB (Tcr_0853); has been suggested to be a proton-DIC symporter. In Hydrogenovibrio crunogenus (strain DSM 25203 / XCL-2) (Thiomicrospira crunogena), this protein is Probable inorganic carbon transporter subunit DabA.